The following is a 712-amino-acid chain: Polyribonucleotide nucleotidyltransferase (712 aa).

Asp-485 and Asp-491 together coordinate Mg(2+). A KH domain is found at 552-611; sequence PRIHTMKIDPKKIKDVIGKGGAVIRSLTEETGTSIDIDDDGTVKIAATDNNAAKMVMSRI. The S1 motif domain occupies 621–689; sequence NAIYTGKVSR…RQNRIRLTMK (69 aa).

This sequence belongs to the polyribonucleotide nucleotidyltransferase family. As to quaternary structure, component of the RNA degradosome, which is a multiprotein complex involved in RNA processing and mRNA degradation. Mg(2+) serves as cofactor.

It is found in the cytoplasm. The enzyme catalyses RNA(n+1) + phosphate = RNA(n) + a ribonucleoside 5'-diphosphate. Involved in mRNA degradation. Catalyzes the phosphorolysis of single-stranded polyribonucleotides processively in the 3'- to 5'-direction. In Haemophilus ducreyi (strain 35000HP / ATCC 700724), this protein is Polyribonucleotide nucleotidyltransferase.